Consider the following 347-residue polypeptide: NADH-ubiquinone oxidoreductase chain 2 (347 aa).

A run of 11 helical transmembrane segments spans residues 3 to 23, 25 to 45, 59 to 79, 96 to 116, 122 to 142, 149 to 169, 178 to 198, 200 to 220, 240 to 260, 276 to 296, and 326 to 346; these read PLIF…VMTT, HWVM…PILM, YFLT…INLV, IIMT…FWVP, VQLS…MSIL, INLD…GWGG, IMAY…VYNP, MALL…MMLM, LTTA…LSGF, MIMP…YMRL, and LSPL…LALL.

This sequence belongs to the complex I subunit 2 family. In terms of assembly, core subunit of respiratory chain NADH dehydrogenase (Complex I) which is composed of 45 different subunits. Interacts with TMEM242.

It localises to the mitochondrion inner membrane. The enzyme catalyses a ubiquinone + NADH + 5 H(+)(in) = a ubiquinol + NAD(+) + 4 H(+)(out). Its function is as follows. Core subunit of the mitochondrial membrane respiratory chain NADH dehydrogenase (Complex I) which catalyzes electron transfer from NADH through the respiratory chain, using ubiquinone as an electron acceptor. Essential for the catalytic activity and assembly of complex I. The protein is NADH-ubiquinone oxidoreductase chain 2 of Nyctimene albiventer (Common tube-nosed fruit bat).